We begin with the raw amino-acid sequence, 692 residues long: Follicle-stimulating hormone receptor (692 aa).

Positions 1–17 are cleaved as a signal peptide; the sequence is MALLLVSLLAFLGTGSG. 2 disulfides stabilise this stretch: Cys18/Cys25 and Cys23/Cys32. The 29-residue stretch at 18 to 46 folds into the LRRNT domain; the sequence is CHHWLCHCSNRVFLCQDSKVTEIPTDLPR. At 18-365 the chain is on the extracellular side; the sequence is CHHWLCHCSN…EDIMGYNILR (348 aa). 9 LRR repeats span residues 49–72, 73–97, 98–118, 119–143, 144–169, 170–192, 193–216, 217–240, and 241–259; these read IELRFVLTKLRVIPKGSFAGFGDL, EKIEISQNDVLEVIEADVFSNLPKL, HEIRIEKANNLLYINPEAFQN, LPSLRYLLISNTGIKHLPAVHKIQS, LQKVLLDIQDNINIHIVARNSFMGLS, FESVILWLSKNGIEEIHNCAFNG, TQLDELNLSDNNNLEELPNDVFQG, ASGPVILDISRTKVHSLPNHGLEN, and LKKLRARSTYRLKKLPNLD. N-linked (GlcNAc...) asparagine glycans are attached at residues Asn191 and Asn199. Disulfide bonds link Cys275-Cys345, Cys276-Cys292, Cys276-Cys355, and Cys292-Cys337. N-linked (GlcNAc...) asparagine glycosylation is present at Asn293. Residue Tyr334 is modified to Sulfotyrosine. A helical transmembrane segment spans residues 366–386; it reads VLIWFISILAITGNTTVLVVL. Over 387 to 397 the chain is Cytoplasmic; that stretch reads TTSQYKLTVPR. A helical transmembrane segment spans residues 398–420; that stretch reads FLMCNLAFADLCIGIYLLLIASV. Residues 421–442 are Extracellular-facing; that stretch reads DIHTKSQYHNYAIDWQTGAGCD. A disulfide bridge links Cys441 with Cys516. Residues 443–464 traverse the membrane as a helical segment; that stretch reads AAGFFTVFASELSVYTLTAITL. Residues 465–484 lie on the Cytoplasmic side of the membrane; sequence ERWHTITHAMQLECKVQLRH. A helical transmembrane segment spans residues 485–507; the sequence is AASVMVLGWTFAFAAALFPIFGI. Topologically, residues 508–527 are extracellular; the sequence is SSYMKVSICLPMDIDSPLSQ. The chain crosses the membrane as a helical span at residues 528–549; sequence LYVMALLVLNVLAFVVICGCYT. Residues 550–572 lie on the Cytoplasmic side of the membrane; the sequence is HIYLTVRNPTIVSSSSDTKIAKR. Residues 573–596 traverse the membrane as a helical segment; the sequence is MATLIFTDFLCMAPISFFAISASL. Topologically, residues 597 to 607 are extracellular; the sequence is KVPLITVSKAK. A helical membrane pass occupies residues 608-629; it reads ILLVLFYPINSCANPFLYAIFT. The Cytoplasmic portion of the chain corresponds to 630 to 692; the sequence is KNFRRDFFIL…LVPLNHSSQN (63 aa).

The protein belongs to the G-protein coupled receptor 1 family. FSH/LSH/TSH subfamily. Homotrimer. Functions as a homotrimer binding the FSH hormone heterodimer composed of CGA and FSHB. Interacts with ARRB2. Interacts with APPL2; interaction is independent of follicle stimulating hormone stimulation. In terms of processing, N-glycosylated; indirectly required for FSH-binding, possibly via a conformational change that allows high affinity binding of hormone. Post-translationally, sulfated. As to expression, sertoli cells and ovarian granulosa cells.

It is found in the cell membrane. In terms of biological role, g protein-coupled receptor for follitropin, the follicle-stimulating hormone. Through cAMP production activates the downstream PI3K-AKT and ERK1/ERK2 signaling pathways. The sequence is that of Follicle-stimulating hormone receptor (Fshr) from Rattus norvegicus (Rat).